Consider the following 470-residue polypeptide: MNPNQKIITIGSVSLGLVVLNILLHIVSITITVLVLPGNGNNPSCNETVIREYNETVRIERVTQWHNTNVIEYLERPESDHFMNNTESLCDAKGFAPFSKDNGIRIGSRGHVFVIREPFVSCSPTECRTFFLTQGSLLNDKHSNGTVKDRSPYRTLMSVQIGQSPNVYQARFEAVAWSATACHDGKKWMTIGVTGPDAKAVAVVHYGGIPTDVINSWAGDILRTQESSCTCIQGECYWVMTDGPANRQAQYRAFKAKQGKIIGQTEISFNGGHIEECSCYPNEGKVECVCRDNWTGTNRPVLVISPDLSYRVGYLCAGLPSDTPRGEDSQFTGSCTSPMGNQGYGVKGFGFRQGNDVWMGRTISRTSRSGFEILKVRNGWVQNSKEQIKRQVVVDNLNWSGYSGSFTLPVELTKRNCLVPCFWVEMIRGKPEEKTIWTSSSSIVMCGVDHEIADWSWHDGAILPFDIDKM.

Residues 1–14 (MNPNQKIITIGSVS) are Intravirion-facing. The interval 11–32 (GSVSLGLVVLNILLHIVSITIT) is involved in apical transport and lipid raft association. Residues 15–35 (LGLVVLNILLHIVSITITVLV) traverse the membrane as a helical segment. The hypervariable stalk region stretch occupies residues 32 to 86 (TVLVLPGNGNNPSCNETVIREYNETVRIERVTQWHNTNVIEYLERPESDHFMNNT). Residues 36 to 470 (LPGNGNNPSC…AILPFDIDKM (435 aa)) are Virion surface-facing. N-linked (GlcNAc...) asparagine; by host glycans are attached at residues asparagine 46, asparagine 54, and asparagine 84. Residues 89-470 (LCDAKGFAPF…AILPFDIDKM (382 aa)) form a head of neuraminidase region. Intrachain disulfides connect cysteine 90–cysteine 417, cysteine 122–cysteine 127, cysteine 182–cysteine 229, cysteine 231–cysteine 236, cysteine 277–cysteine 290, cysteine 279–cysteine 288, cysteine 316–cysteine 335, and cysteine 421–cysteine 446. Residue arginine 116 participates in substrate binding. A glycan (N-linked (GlcNAc...) asparagine; by host) is linked at asparagine 144. Catalysis depends on aspartate 149, which acts as the Proton donor/acceptor. Substrate is bound at residue arginine 150. 275–276 (EE) lines the substrate pocket. Arginine 291 provides a ligand contact to substrate. Ca(2+) is bound at residue aspartate 292. N-linked (GlcNAc...) asparagine; by host glycosylation occurs at asparagine 293. Positions 296 and 322 each coordinate Ca(2+). Substrate is bound at residue arginine 368. The N-linked (GlcNAc...) asparagine; by host glycan is linked to asparagine 398. Tyrosine 402 serves as the catalytic Nucleophile.

This sequence belongs to the glycosyl hydrolase 34 family. In terms of assembly, homotetramer. Ca(2+) is required as a cofactor. N-glycosylated.

The protein resides in the virion membrane. The protein localises to the host apical cell membrane. It carries out the reaction Hydrolysis of alpha-(2-&gt;3)-, alpha-(2-&gt;6)-, alpha-(2-&gt;8)- glycosidic linkages of terminal sialic acid residues in oligosaccharides, glycoproteins, glycolipids, colominic acid and synthetic substrates.. Its activity is regulated as follows. Inhibited by the neuraminidase inhibitors zanamivir (Relenza) and oseltamivir (Tamiflu). These drugs interfere with the release of progeny virus from infected cells and are effective against all influenza strains. Resistance to neuraminidase inhibitors is quite rare. In terms of biological role, catalyzes the removal of terminal sialic acid residues from viral and cellular glycoconjugates. Cleaves off the terminal sialic acids on the glycosylated HA during virus budding to facilitate virus release. Additionally helps virus spread through the circulation by further removing sialic acids from the cell surface. These cleavages prevent self-aggregation and ensure the efficient spread of the progeny virus from cell to cell. Otherwise, infection would be limited to one round of replication. Described as a receptor-destroying enzyme because it cleaves a terminal sialic acid from the cellular receptors. May facilitate viral invasion of the upper airways by cleaving the sialic acid moieties on the mucin of the airway epithelial cells. Likely to plays a role in the budding process through its association with lipid rafts during intracellular transport. May additionally display a raft-association independent effect on budding. Plays a role in the determination of host range restriction on replication and virulence. Sialidase activity in late endosome/lysosome traffic seems to enhance virus replication. This chain is Neuraminidase, found in Aves.